The following is a 65-amino-acid chain: MPKIKTRRSAAKRFSVTGSGKFKRRKQNLRHILTKKNAKRRMRLGQSATVDSTNEKAVRRMMPYA.

Residues 1–11 (MPKIKTRRSAA) are compositionally biased toward basic residues. 2 disordered regions span residues 1 to 24 (MPKI…KFKR) and 41 to 65 (RMRL…MPYA).

Belongs to the bacterial ribosomal protein bL35 family.

In Nitratidesulfovibrio vulgaris (strain DSM 19637 / Miyazaki F) (Desulfovibrio vulgaris), this protein is Large ribosomal subunit protein bL35.